Reading from the N-terminus, the 810-residue chain is Sister chromatid cohesion 1 protein 2 (810 aa).

Disordered stretches follow at residues 200-244, 273-315, and 606-626; these read RDTT…LLEP, SHES…SECG, and MGAS…AETP. Composition is skewed to basic and acidic residues over residues 220-234 and 273-310; these read EPSR…HRED and SHES…DRSL. Residues 606 to 622 are compositionally biased toward polar residues; that stretch reads MGASSTTSGTAHQTENA.

The protein belongs to the rad21 family. Component of the cohesin complex. As to expression, low expression in shoots, buds, siliques, leaves and roots. Found in, but not limited to, actively dividing cells: in procambium, protoderm and ground meristem in roots, and in shoot and floral meristems.

The protein localises to the nucleus. Functionally, may be involved in sister chromatid cohesion during mitosis. This is Sister chromatid cohesion 1 protein 2 (SYN2) from Arabidopsis thaliana (Mouse-ear cress).